Here is a 185-residue protein sequence, read N- to C-terminus: Tetratricopeptide repeat protein 36 homolog (185 aa).

TPR repeat units lie at residues Ser-53–Ala-86, Val-88–Gln-119, and Cys-125–Phe-158.

It belongs to the TTC36 family.

The polypeptide is Tetratricopeptide repeat protein 36 homolog (Drosophila melanogaster (Fruit fly)).